Consider the following 71-residue polypeptide: Prokaryotic ubiquitin-like protein Pup (71 aa).

Basic and acidic residues predominate over residues methionine 1–glutamate 18. Residues methionine 1–arginine 36 are disordered. The ARC ATPase binding stretch occupies residues threonine 27–tyrosine 65. The stretch at serine 30–glutamate 59 forms a coiled coil. Glutamate 71 is covalently cross-linked (Isoglutamyl lysine isopeptide (Glu-Lys) (interchain with K-? in acceptor proteins)).

Belongs to the prokaryotic ubiquitin-like protein family. Strongly interacts with the proteasome-associated ATPase ARC through a hydrophobic interface; the interacting region of Pup lies in its C-terminal half. There is one Pup binding site per ARC hexamer ring.

The protein operates within protein degradation; proteasomal Pup-dependent pathway. Functionally, protein modifier that is covalently attached to lysine residues of substrate proteins, thereby targeting them for proteasomal degradation. The tagging system is termed pupylation. This chain is Prokaryotic ubiquitin-like protein Pup, found in Acidothermus cellulolyticus (strain ATCC 43068 / DSM 8971 / 11B).